Consider the following 364-residue polypeptide: Aminomethyltransferase (364 aa).

It belongs to the GcvT family. As to quaternary structure, the glycine cleavage system is composed of four proteins: P, T, L and H.

It carries out the reaction N(6)-[(R)-S(8)-aminomethyldihydrolipoyl]-L-lysyl-[protein] + (6S)-5,6,7,8-tetrahydrofolate = N(6)-[(R)-dihydrolipoyl]-L-lysyl-[protein] + (6R)-5,10-methylene-5,6,7,8-tetrahydrofolate + NH4(+). Functionally, the glycine cleavage system catalyzes the degradation of glycine. The polypeptide is Aminomethyltransferase (Salmonella paratyphi C (strain RKS4594)).